The chain runs to 361 residues: GDSL esterase/lipase At4g18970 (361 aa).

Residues 1 to 22 form the signal peptide; it reads MARVCVMMMAMAIAMAMNIAMG. S35 functions as the Nucleophile in the catalytic mechanism. Catalysis depends on residues D325 and H328.

This sequence belongs to the 'GDSL' lipolytic enzyme family.

The protein resides in the secreted. This Arabidopsis thaliana (Mouse-ear cress) protein is GDSL esterase/lipase At4g18970.